A 285-amino-acid chain; its full sequence is Alginate lyase (285 aa).

Residues 1 to 20 (MIKSNLVISSLAIVSSMSYA) form the signal peptide.

This sequence belongs to the polysaccharide lyase 6 family.

The catalysed reaction is Eliminative cleavage of alginate to give oligosaccharides with 4-deoxy-alpha-L-erythro-hex-4-enuronosyl groups at their non-reducing ends and beta-D-mannuronate at their reducing end.. The sequence is that of Alginate lyase (alxM) from Photobacterium sp. (strain ATCC 43367).